The primary structure comprises 196 residues: Phosphatidyl-N-methylethanolamine N-methyltransferase (196 aa).

Residue methionine 1 is a topological domain, lumenal. An intramembrane region (helical) is located at residues 2–28 (AIFEINNSFLICAVSIALNPLLWNIAA). Residues 29 to 40 (RSEYNHKTLTKL) lie on the Lumenal side of the membrane. The chain crosses the membrane as a helical span at residues 41-62 (ANGDSKKACYMLAACIFVAGIV). Topologically, residues 63 to 89 (RDLIYQNALKQQPTLGIFMNPLVQGIA) are cytoplasmic. A helical transmembrane segment spans residues 90 to 110 (KLIFCFGSVLVLSSMYKLGLV). An S-adenosyl-L-methionine-binding site is contributed by 94–96 (CFG). The Lumenal segment spans residues 111–153 (GTYLGDYFGFLLPERVSGFPFNVNDNPMYNGSTLCFLSTALRY). A helical transmembrane segment spans residues 154–174 (GKVAGLLLTLEVFFVYRIALK). At 175–196 (FEEPFTAKIYAARDSKQAKKSE) the chain is on the cytoplasmic side. Position 176–177 (176–177 (EE)) interacts with S-adenosyl-L-methionine.

Belongs to the class VI-like SAM-binding methyltransferase superfamily. PEMT/PEM2 methyltransferase family.

It is found in the endoplasmic reticulum membrane. It localises to the mitochondrion membrane. It catalyses the reaction a 1,2-diacyl-sn-glycero-3-phospho-N-methylethanolamine + S-adenosyl-L-methionine = a 1,2-diacyl-sn-glycero-3-phospho-N,N-dimethylethanolamine + S-adenosyl-L-homocysteine + H(+). It carries out the reaction a 1,2-diacyl-sn-glycero-3-phospho-N,N-dimethylethanolamine + S-adenosyl-L-methionine = a 1,2-diacyl-sn-glycero-3-phosphocholine + S-adenosyl-L-homocysteine + H(+). It participates in phospholipid metabolism; phosphatidylcholine biosynthesis. Catalyzes the second two steps of the methylation pathway of phosphatidylcholine biosynthesis, the SAM-dependent methylation of phosphatidylmonomethylethanolamine (PMME) to phosphatidyldimethylethanolamine (PDME) and of PDME to phosphatidylcholine (PC). This chain is Phosphatidyl-N-methylethanolamine N-methyltransferase, found in Schizosaccharomyces pombe (strain 972 / ATCC 24843) (Fission yeast).